Here is a 128-residue protein sequence, read N- to C-terminus: Holo-[acyl-carrier-protein] synthase (128 aa).

Positions 8 and 58 each coordinate Mg(2+).

It belongs to the P-Pant transferase superfamily. AcpS family. Requires Mg(2+) as cofactor.

Its subcellular location is the cytoplasm. It carries out the reaction apo-[ACP] + CoA = holo-[ACP] + adenosine 3',5'-bisphosphate + H(+). Transfers the 4'-phosphopantetheine moiety from coenzyme A to a Ser of acyl-carrier-protein. This chain is Holo-[acyl-carrier-protein] synthase, found in Alkalilimnicola ehrlichii (strain ATCC BAA-1101 / DSM 17681 / MLHE-1).